A 541-amino-acid chain; its full sequence is 3-oxoacyl-[acyl-carrier-protein] synthase II, chloroplastic (541 aa).

A chloroplast-targeting transit peptide spans 1–103 (MVGASSSYAS…NRNQRRLNRA (103 aa)). The 411-residue stretch at 129–539 (QRRVVVTGMG…GHNSSIIFAP (411 aa)) folds into the Ketosynthase family 3 (KS3) domain. Active-site for beta-ketoacyl synthase activity residues include Cys292, His432, and His468.

The protein belongs to the thiolase-like superfamily. Beta-ketoacyl-ACP synthases family. In terms of assembly, homodimer. In terms of tissue distribution, mostly expressed in siliques, and, to a lower extent, in leaves, stems, flower buds, and flowers.

The protein resides in the plastid. It is found in the chloroplast stroma. The enzyme catalyses a fatty acyl-[ACP] + malonyl-[ACP] + H(+) = a 3-oxoacyl-[ACP] + holo-[ACP] + CO2. In terms of biological role, essential protein that catalyzes the condensation reaction of fatty acid synthesis by the addition to an acyl acceptor of two carbons from malonyl-ACP. Specific for elongation from C-16 and C-16 to unsaturated C-18 fatty acids. Confers resistance to low temperatures by maintaining chloroplast membranes integrity. Involved in the regulation of fatty acids ratios during seed metabolism. Required for embryo development, especially at the transition from the globular to the heart stage. The protein is 3-oxoacyl-[acyl-carrier-protein] synthase II, chloroplastic (KAS2) of Arabidopsis thaliana (Mouse-ear cress).